The chain runs to 813 residues: Protein PPP4R3C1 (813 aa).

The segment at 730–813 (NESESAIEGQ…PPPKRPNLST (84 aa)) is disordered. Residues 777–788 (YDTDDENDDDPY) are compositionally biased toward acidic residues.

The protein belongs to the SMEK family.

The protein is Protein PPP4R3C1 of Mus musculus (Mouse).